The sequence spans 390 residues: Tuftelin (390 aa).

Coiled coils occupy residues 88–126 and 163–352; these read DKMT…KLDR and PSMS…EKQV. Residues 356-383 form a disordered region; the sequence is NFSTQARAKTENLGSVRISKPPSPKPMP.

It belongs to the tuftelin family. In terms of assembly, interacts with TFIP11. May form oligomers. Ameloblasts, and also non-odontogenic tissues including kidney, lung, liver and testis.

It localises to the secreted. Its function is as follows. Involved in the structural organization of the epidermis. Involved in the mineralization and structural organization of enamel. This is Tuftelin (Tuft1) from Mus musculus (Mouse).